The primary structure comprises 436 residues: UDP-N-acetylmuramate--L-alanine ligase (436 aa).

An ATP-binding site is contributed by 108–114 (GAHGKTS).

This sequence belongs to the MurCDEF family.

It is found in the cytoplasm. The enzyme catalyses UDP-N-acetyl-alpha-D-muramate + L-alanine + ATP = UDP-N-acetyl-alpha-D-muramoyl-L-alanine + ADP + phosphate + H(+). It participates in cell wall biogenesis; peptidoglycan biosynthesis. Cell wall formation. This is UDP-N-acetylmuramate--L-alanine ligase from Bacillus cereus (strain B4264).